We begin with the raw amino-acid sequence, 449 residues long: Biotin carboxylase (449 aa).

Residues 4-448 form the Biotin carboxylation domain; it reads MIEKVLIANR…NIHYLEKMLG (445 aa). Residues Lys119, Lys162, 168–169, 204–207, His212, and His239 contribute to the ATP site; these read GG and EKYL. Residues 123–320 enclose the ATP-grasp domain; sequence IAAMKAAGVP…IVKEQILIAA (198 aa). Lys241 lines the hydrogencarbonate pocket. Positions 279 and 291 each coordinate ATP. Positions 279, 291, and 293 each coordinate Mg(2+). Glu279, Glu291, and Asn293 together coordinate Mn(2+). Positions 295, 298, and 341 each coordinate hydrogencarbonate. Arg295 is an active-site residue. Arg341 is a binding site for biotin.

In terms of assembly, acetyl-CoA carboxylase is a heterohexamer of biotin carboxyl carrier protein, biotin carboxylase and the two subunits of carboxyl transferase in a 2:2 complex. It depends on Mg(2+) as a cofactor. Mn(2+) serves as cofactor.

It carries out the reaction N(6)-biotinyl-L-lysyl-[protein] + hydrogencarbonate + ATP = N(6)-carboxybiotinyl-L-lysyl-[protein] + ADP + phosphate + H(+). The protein operates within lipid metabolism; malonyl-CoA biosynthesis; malonyl-CoA from acetyl-CoA: step 1/1. This protein is a component of the acetyl coenzyme A carboxylase complex; first, biotin carboxylase catalyzes the carboxylation of the carrier protein and then the transcarboxylase transfers the carboxyl group to form malonyl-CoA. The polypeptide is Biotin carboxylase (accC) (Allochromatium vinosum (strain ATCC 17899 / DSM 180 / NBRC 103801 / NCIMB 10441 / D) (Chromatium vinosum)).